The chain runs to 475 residues: UDP-N-acetylmuramate--L-alanine ligase (475 aa).

125-131 (GTHGKTT) is an ATP binding site.

It belongs to the MurCDEF family.

It is found in the cytoplasm. It carries out the reaction UDP-N-acetyl-alpha-D-muramate + L-alanine + ATP = UDP-N-acetyl-alpha-D-muramoyl-L-alanine + ADP + phosphate + H(+). It functions in the pathway cell wall biogenesis; peptidoglycan biosynthesis. Functionally, cell wall formation. The polypeptide is UDP-N-acetylmuramate--L-alanine ligase (Actinobacillus pleuropneumoniae serotype 7 (strain AP76)).